Here is a 257-residue protein sequence, read N- to C-terminus: Thiazole synthase (257 aa).

The active-site Schiff-base intermediate with DXP is the Lys-96. 1-deoxy-D-xylulose 5-phosphate is bound by residues Gly-157, 184–185 (AG), and 206–207 (NT).

Belongs to the ThiG family. In terms of assembly, homotetramer. Forms heterodimers with either ThiH or ThiS.

Its subcellular location is the cytoplasm. The enzyme catalyses [ThiS sulfur-carrier protein]-C-terminal-Gly-aminoethanethioate + 2-iminoacetate + 1-deoxy-D-xylulose 5-phosphate = [ThiS sulfur-carrier protein]-C-terminal Gly-Gly + 2-[(2R,5Z)-2-carboxy-4-methylthiazol-5(2H)-ylidene]ethyl phosphate + 2 H2O + H(+). It functions in the pathway cofactor biosynthesis; thiamine diphosphate biosynthesis. In terms of biological role, catalyzes the rearrangement of 1-deoxy-D-xylulose 5-phosphate (DXP) to produce the thiazole phosphate moiety of thiamine. Sulfur is provided by the thiocarboxylate moiety of the carrier protein ThiS. In vitro, sulfur can be provided by H(2)S. The chain is Thiazole synthase from Rhizobium meliloti (strain 1021) (Ensifer meliloti).